The chain runs to 505 residues: L-arabinose isomerase (505 aa).

Residues E308, E335, H352, and H453 each contribute to the Mn(2+) site.

The protein belongs to the arabinose isomerase family. Mn(2+) serves as cofactor.

It carries out the reaction beta-L-arabinopyranose = L-ribulose. Its pathway is carbohydrate degradation; L-arabinose degradation via L-ribulose; D-xylulose 5-phosphate from L-arabinose (bacterial route): step 1/3. Functionally, catalyzes the conversion of L-arabinose to L-ribulose. The chain is L-arabinose isomerase from Bifidobacterium longum (strain DJO10A).